A 39-amino-acid polypeptide reads, in one-letter code: Natriuretic peptide CnNP-a (39 aa).

The propeptide occupies 1 to 8; sequence SGSKTAKI. Cysteine 12 and cysteine 28 are disulfide-bonded.

The protein belongs to the natriuretic peptide family. Expressed by the venom gland.

The protein resides in the secreted. Functionally, snake venom natriuretic peptide that targets both NPR1 and NPR2. Exhibits hypotensive and vasodepressor activities. The chain is Natriuretic peptide CnNP-a from Cryptophis nigrescens (Eastern small-eyed snake).